We begin with the raw amino-acid sequence, 256 residues long: Imidazole glycerol phosphate synthase subunit HisF (256 aa).

Active-site residues include Asp13 and Asp132.

It belongs to the HisA/HisF family. In terms of assembly, heterodimer of HisH and HisF.

It localises to the cytoplasm. The catalysed reaction is 5-[(5-phospho-1-deoxy-D-ribulos-1-ylimino)methylamino]-1-(5-phospho-beta-D-ribosyl)imidazole-4-carboxamide + L-glutamine = D-erythro-1-(imidazol-4-yl)glycerol 3-phosphate + 5-amino-1-(5-phospho-beta-D-ribosyl)imidazole-4-carboxamide + L-glutamate + H(+). The protein operates within amino-acid biosynthesis; L-histidine biosynthesis; L-histidine from 5-phospho-alpha-D-ribose 1-diphosphate: step 5/9. Its function is as follows. IGPS catalyzes the conversion of PRFAR and glutamine to IGP, AICAR and glutamate. The HisF subunit catalyzes the cyclization activity that produces IGP and AICAR from PRFAR using the ammonia provided by the HisH subunit. In Leptospira interrogans serogroup Icterohaemorrhagiae serovar copenhageni (strain Fiocruz L1-130), this protein is Imidazole glycerol phosphate synthase subunit HisF.